An 89-amino-acid polypeptide reads, in one-letter code: Small ribosomal subunit protein bS18 (89 aa).

It belongs to the bacterial ribosomal protein bS18 family. In terms of assembly, part of the 30S ribosomal subunit. Forms a tight heterodimer with protein bS6.

In terms of biological role, binds as a heterodimer with protein bS6 to the central domain of the 16S rRNA, where it helps stabilize the platform of the 30S subunit. In Phocaeicola vulgatus (strain ATCC 8482 / DSM 1447 / JCM 5826 / CCUG 4940 / NBRC 14291 / NCTC 11154) (Bacteroides vulgatus), this protein is Small ribosomal subunit protein bS18.